The chain runs to 341 residues: ATPase GET3 (341 aa).

Position 34–41 (34–41) interacts with ATP; that stretch reads KGGVGKTT. Asp-63 is an active-site residue. ATP contacts are provided by Glu-245 and Asn-272. Zn(2+) is bound by residues Cys-283 and Cys-286.

Belongs to the arsA ATPase family. Homodimer.

It localises to the cytoplasm. The protein resides in the endoplasmic reticulum. In terms of biological role, ATPase required for the post-translational delivery of tail-anchored (TA) proteins to the endoplasmic reticulum. Recognizes and selectively binds the transmembrane domain of TA proteins in the cytosol. This complex then targets to the endoplasmic reticulum by membrane-bound receptors, where the tail-anchored protein is released for insertion. This process is regulated by ATP binding and hydrolysis. ATP binding drives the homodimer towards the closed dimer state, facilitating recognition of newly synthesized TA membrane proteins. ATP hydrolysis is required for insertion. Subsequently, the homodimer reverts towards the open dimer state, lowering its affinity for the membrane-bound receptor, and returning it to the cytosol to initiate a new round of targeting. This is ATPase GET3 from Ajellomyces capsulatus (strain G186AR / H82 / ATCC MYA-2454 / RMSCC 2432) (Darling's disease fungus).